Consider the following 554-residue polypeptide: Wee1-like protein kinase 2-C (554 aa).

2 disordered regions span residues 1 to 86 and 145 to 183; these read MRTA…GGEC and TLVN…SQMK. Polar residues-rich tracts occupy residues 38–48 and 147–163; these read SPVSSWRTNNC and VNVN…THFQ. Positions 213-487 constitute a Protein kinase domain; it reads FLEIEKIGAG…AKNSVLRRCV (275 aa). ATP is bound by residues 219 to 227 and K242; that span reads IGAGEFGSV. Residue D340 is the Proton acceptor of the active site. Mg(2+) is bound by residues N345 and D377. A coiled-coil region spans residues 490–516; it reads AAELQKQLNVEKFKTAMLERELQAAKL.

It belongs to the protein kinase superfamily. Ser/Thr protein kinase family. WEE1 subfamily.

The protein resides in the nucleus. The catalysed reaction is L-tyrosyl-[protein] + ATP = O-phospho-L-tyrosyl-[protein] + ADP + H(+). Functionally, protein tyrosine kinase that phosphorylates and inhibits cdk1 and acts as a regulator of meiosis in oocytes. Required to ensure the meiotic cell cycle in oocytes by phosphorylating cdk1 at 'Tyr-15', leading to inhibit cdk1 activity and prevent meiosis. The sequence is that of Wee1-like protein kinase 2-C (wee2-c) from Xenopus laevis (African clawed frog).